The sequence spans 128 residues: MQRHMLKSKIHRAAVTHCELHYEGSCAIDEDLLEAAGLIENERIDIWNINNGERFSTYAIKGERGSGMISLNGSAARRAQLGDLVIIAAFAMVDEAELQAGWKPKLVFIDEGNKIKGHRDHVPTQNWT.

Catalysis depends on serine 25, which acts as the Schiff-base intermediate with substrate; via pyruvic acid. At serine 25 the chain carries Pyruvic acid (Ser). Threonine 57 is a binding site for substrate. The Proton donor role is filled by tyrosine 58. Position 73-75 (73-75) interacts with substrate; the sequence is GSA.

This sequence belongs to the PanD family. In terms of assembly, heterooctamer of four alpha and four beta subunits. It depends on pyruvate as a cofactor. In terms of processing, is synthesized initially as an inactive proenzyme, which is activated by self-cleavage at a specific serine bond to produce a beta-subunit with a hydroxyl group at its C-terminus and an alpha-subunit with a pyruvoyl group at its N-terminus.

The protein resides in the cytoplasm. The catalysed reaction is L-aspartate + H(+) = beta-alanine + CO2. It functions in the pathway cofactor biosynthesis; (R)-pantothenate biosynthesis; beta-alanine from L-aspartate: step 1/1. Functionally, catalyzes the pyruvoyl-dependent decarboxylation of aspartate to produce beta-alanine. The protein is Aspartate 1-decarboxylase of Burkholderia cenocepacia (strain ATCC BAA-245 / DSM 16553 / LMG 16656 / NCTC 13227 / J2315 / CF5610) (Burkholderia cepacia (strain J2315)).